The chain runs to 113 residues: Large ribosomal subunit protein bL19 (113 aa).

Belongs to the bacterial ribosomal protein bL19 family.

Its function is as follows. This protein is located at the 30S-50S ribosomal subunit interface and may play a role in the structure and function of the aminoacyl-tRNA binding site. The sequence is that of Large ribosomal subunit protein bL19 from Mycolicibacterium gilvum (strain PYR-GCK) (Mycobacterium gilvum (strain PYR-GCK)).